The following is a 316-amino-acid chain: N-acetyl-gamma-glutamyl-phosphate reductase (316 aa).

The active site involves C136.

This sequence belongs to the NAGSA dehydrogenase family. Type 1 subfamily.

Its subcellular location is the cytoplasm. It catalyses the reaction N-acetyl-L-glutamate 5-semialdehyde + phosphate + NADP(+) = N-acetyl-L-glutamyl 5-phosphate + NADPH + H(+). The protein operates within amino-acid biosynthesis; L-arginine biosynthesis; N(2)-acetyl-L-ornithine from L-glutamate: step 3/4. Catalyzes the NADPH-dependent reduction of N-acetyl-5-glutamyl phosphate to yield N-acetyl-L-glutamate 5-semialdehyde. The protein is N-acetyl-gamma-glutamyl-phosphate reductase of Xanthomonas campestris pv. campestris (strain 8004).